The sequence spans 552 residues: Urocanate hydratase (552 aa).

NAD(+) contacts are provided by residues 49–50 (GG), Gln127, 173–175 (GMG), Asp193, 239–240 (NA), 260–264 (QTSAH), 270–271 (YI), and Tyr319. Cys407 is an active-site residue. Gly489 is a binding site for NAD(+).

This sequence belongs to the urocanase family. It depends on NAD(+) as a cofactor.

Its subcellular location is the cytoplasm. It catalyses the reaction 4-imidazolone-5-propanoate = trans-urocanate + H2O. The protein operates within amino-acid degradation; L-histidine degradation into L-glutamate; N-formimidoyl-L-glutamate from L-histidine: step 2/3. Catalyzes the conversion of urocanate to 4-imidazolone-5-propionate. This Bacillus cereus (strain B4264) protein is Urocanate hydratase.